The sequence spans 737 residues: Dipeptidyl peptidase 3 (737 aa).

At alanine 2 the chain carries N-acetylalanine. Histidine 450 serves as a coordination point for Zn(2+). Glutamate 451 is a catalytic residue. Zn(2+) contacts are provided by histidine 455 and glutamate 508.

Belongs to the peptidase M49 family. Zn(2+) is required as a cofactor. In terms of tissue distribution, detected in placenta (at protein level). Detected in erythrocytes (at protein level).

The protein localises to the cytoplasm. It is found in the cytosol. It carries out the reaction Release of an N-terminal dipeptide from a peptide comprising four or more residues, with broad specificity. Also acts on dipeptidyl 2-naphthylamides.. Its activity is regulated as follows. Activated by Co(2+). Inhibited by EDTA and o-phenanthroline (in vitro). In terms of biological role, cleaves and degrades bioactive peptides, including angiotensin, Leu-enkephalin and Met-enkephalin. Also cleaves Arg-Arg-beta-naphthylamide (in vitro). The sequence is that of Dipeptidyl peptidase 3 (DPP3) from Homo sapiens (Human).